The chain runs to 562 residues: Tripeptidyl-peptidase 1 (562 aa).

The first 19 residues, 1-19 (MGLQARLLGLLALVIAGKC), serve as a signal peptide directing secretion. Residues 20–194 (TYNPEPDQRW…PEPQQVGTVS (175 aa)) constitute a propeptide, removed in mature form. Cysteine 111 and cysteine 122 are joined by a disulfide. The region spanning 198–562 (GVTPSVLRQR…PALLKTLLNP (365 aa)) is the Peptidase S53 domain. An N-linked (GlcNAc...) asparagine glycan is attached at asparagine 209. An N-linked (GlcNAc...) (high mannose) asparagine glycan is attached at asparagine 221. Catalysis depends on charge relay system residues glutamate 271 and aspartate 275. 3 N-linked (GlcNAc...) asparagine glycosylation sites follow: asparagine 285, asparagine 312, and asparagine 442. Cystine bridges form between cysteine 364–cysteine 525 and cysteine 521–cysteine 536. Catalysis depends on serine 474, which acts as the Charge relay system. Residues aspartate 516 and valine 517 each contribute to the Ca(2+) site. The Ca(2+) site is built by glycine 538, glycine 540, and aspartate 542.

Monomer. Interacts with CLN5. Interacts with CLN3. The cofactor is Ca(2+). In terms of processing, activated by autocatalytic proteolytical processing upon acidification. N-glycosylation is required for processing and activity.

Its subcellular location is the lysosome. It localises to the melanosome. It carries out the reaction Release of an N-terminal tripeptide from a polypeptide, but also has endopeptidase activity.. Lysosomal serine protease with tripeptidyl-peptidase I activity. May act as a non-specific lysosomal peptidase which generates tripeptides from the breakdown products produced by lysosomal proteinases. Requires substrates with an unsubstituted N-terminus. This is Tripeptidyl-peptidase 1 (Tpp1) from Mus musculus (Mouse).